The chain runs to 468 residues: ATP synthase subunit beta (468 aa).

Gly-155–Thr-162 contacts ATP.

It belongs to the ATPase alpha/beta chains family. In terms of assembly, F-type ATPases have 2 components, CF(1) - the catalytic core - and CF(0) - the membrane proton channel. CF(1) has five subunits: alpha(3), beta(3), gamma(1), delta(1), epsilon(1). CF(0) has three main subunits: a(1), b(2) and c(9-12). The alpha and beta chains form an alternating ring which encloses part of the gamma chain. CF(1) is attached to CF(0) by a central stalk formed by the gamma and epsilon chains, while a peripheral stalk is formed by the delta and b chains.

The protein resides in the cell membrane. It carries out the reaction ATP + H2O + 4 H(+)(in) = ADP + phosphate + 5 H(+)(out). Produces ATP from ADP in the presence of a proton gradient across the membrane. The catalytic sites are hosted primarily by the beta subunits. The sequence is that of ATP synthase subunit beta from Bacillus cereus (strain B4264).